The primary structure comprises 267 residues: Hydroxynaphthalene reductase-like protein Arp2 (267 aa).

I25, N45, D71, and N98 together coordinate NADP(+). Residues S147 and S148 each act as proton donor in the active site. The NADP(+) site is built by Y162, K166, V195, and T197. The Proton acceptor role is filled by Y162. The Lowers pKa of active site Tyr role is filled by K166.

The protein belongs to the short-chain dehydrogenases/reductases (SDR) family.

In terms of biological role, hydroxynaphthalene reductase-like protein; part of the Pks2 gene cluster that mediates the formation of infectious structures (appressoria), enabling these fungi to kill insects faster. The product of the Pks2 gene cluster is different from the one of Pks1 and has still not been identified. The protein is Hydroxynaphthalene reductase-like protein Arp2 of Metarhizium guizhouense (strain ARSEF 977).